Here is a 224-residue protein sequence, read N- to C-terminus: LRP chaperone MESD (224 aa).

The N-terminal stretch at 1–29 is a signal peptide; the sequence is MAASRWLRAVLLFLCASDLLLLPPPNAYA. A chaperone domain region spans residues 1 to 155; sequence MAASRWLRAV…DRAIFMLRDG (155 aa). 2 disordered regions span residues 28 to 49 and 178 to 224; these read YAAD…IRDY and GQMY…REDL. The interval 156–195 is escort domain; sequence SYAWEIKDFLVSQDRCAEVTLEGQMYPGKGGGSKEKNKTK. Positions 187–224 are enriched in basic and acidic residues; sequence GSKEKNKTKPEKAKKKEGDPKPRASKEDNRAGSRREDL. N-linked (GlcNAc...) asparagine glycosylation occurs at Asn-192. A Prevents secretion from ER motif is present at residues 221 to 224; it reads REDL.

It belongs to the MESD family. As to quaternary structure, monomer. Interacts with LRP5; the interaction prevents LRP5 from forming aggregates and chaperones LRP6 to the plasma membrane. Interacts with LRP6; the interaction prevents LRP6 from forming aggregates and chaperones LRP6 to the plasma membrane. Interacts with LRP4; the interaction promotes glycosylation of LRP4 and its cell-surface expression. In terms of tissue distribution, expressed in many tissues, but not in skeletal muscles. In the retina expressed in retinal ganglion cells, inner and outer plexiform layers, photoreceptor inner and outer segments and retinal pigment epithelium (at protein level).

It localises to the endoplasmic reticulum. Chaperone specifically assisting the folding of beta-propeller/EGF modules within the family of low-density lipoprotein receptors (LDLRs). Acts as a modulator of the Wnt pathway through chaperoning the coreceptors of the canonical Wnt pathway, LRP5 and LRP6, to the plasma membrane. Essential for specification of embryonic polarity and mesoderm induction. Plays an essential role in neuromuscular junction (NMJ) formation by promoting cell-surface expression of LRP4. May regulate phagocytosis of apoptotic retinal pigment epithelium (RPE) cells. The polypeptide is LRP chaperone MESD (Mus musculus (Mouse)).